Here is a 511-residue protein sequence, read N- to C-terminus: Sodium/proline symporter (511 aa).

The next 13 helical transmembrane spans lie at 16 to 36 (WQTY…GFYG), 54 to 74 (IGPY…WMIM), 85 to 105 (LSAI…YFVV), 139 to 159 (IISG…GFVS), 175 to 195 (GLLI…YLAV), 199 to 219 (DFFQ…VALL), 246 to 266 (VLGI…PHII), 284 to 304 (LGIS…LTGI), 327 to 347 (ILFH…AIMS), 381 to 401 (FVLI…TIAW), 407 to 427 (ILNL…PLVL), 438 to 458 (AGAI…ISWI), and 467 to 487 (FFGM…TYIV).

It belongs to the sodium:solute symporter (SSF) (TC 2.A.21) family.

The protein localises to the cell membrane. The catalysed reaction is L-proline(in) + Na(+)(in) = L-proline(out) + Na(+)(out). Catalyzes the sodium-dependent uptake of extracellular L-proline. The sequence is that of Sodium/proline symporter (putP) from Staphylococcus epidermidis (strain ATCC 35984 / DSM 28319 / BCRC 17069 / CCUG 31568 / BM 3577 / RP62A).